Reading from the N-terminus, the 183-residue chain is Large ribosomal subunit protein uL5 (183 aa).

It belongs to the universal ribosomal protein uL5 family. As to quaternary structure, part of the 50S ribosomal subunit; part of the 5S rRNA/L5/L18/L25 subcomplex. Contacts the 5S rRNA and the P site tRNA. Forms a bridge to the 30S subunit in the 70S ribosome.

This is one of the proteins that bind and probably mediate the attachment of the 5S RNA into the large ribosomal subunit, where it forms part of the central protuberance. In the 70S ribosome it contacts protein S13 of the 30S subunit (bridge B1b), connecting the 2 subunits; this bridge is implicated in subunit movement. Contacts the P site tRNA; the 5S rRNA and some of its associated proteins might help stabilize positioning of ribosome-bound tRNAs. This Flavobacterium johnsoniae (strain ATCC 17061 / DSM 2064 / JCM 8514 / BCRC 14874 / CCUG 350202 / NBRC 14942 / NCIMB 11054 / UW101) (Cytophaga johnsonae) protein is Large ribosomal subunit protein uL5.